Consider the following 217-residue polypeptide: Lipoprotein CseA (217 aa).

The first 34 residues, 1 to 34, serve as a signal peptide directing secretion; sequence MRGLGTESLRARGALKAAIAAVAGLAVLGLSVSA. Residue Cys35 is the site of N-palmitoyl cysteine attachment. A lipid anchor (S-diacylglycerol cysteine) is attached at Cys35. Disordered stretches follow at residues 39-66 and 192-217; these read GTGARDEGPAGSDSVAAGAATPTVSPSK and FSEESRTHTEYSNAVGGTDSATPAPN.

It localises to the cell membrane. May be involved in the stabilization of the cell envelope or may interact with the sensor protein CseC to modulate its activity, in response to cell envelope stress. This is Lipoprotein CseA (cseA) from Streptomyces avermitilis (strain ATCC 31267 / DSM 46492 / JCM 5070 / NBRC 14893 / NCIMB 12804 / NRRL 8165 / MA-4680).